We begin with the raw amino-acid sequence, 379 residues long: Stimulator of interferon genes protein (379 aa).

Residues 1–23 (MPQDPSTRSSPARLLIPEPRAGR) lie on the Cytoplasmic side of the membrane. Residues 24-40 (ARHAACVLLAVCFVVLF) form a helical membrane-spanning segment. Over 41–50 (LSGEPLAPII) the chain is Lumenal. The chain crosses the membrane as a helical span at residues 51–75 (RSVCTQLAALQLGVLLKGCCCLAEE). Over 76 to 97 (IFHLHSRHHGSLWQVLCSCFPP) the chain is Cytoplasmic. The chain crosses the membrane as a helical span at residues 98–111 (RWYLALLLVGGSAY). The Lumenal portion of the chain corresponds to 112–121 (LDPPEDNGHS). Residues 122–139 (PRLALTLSCLCQLLVLAL) traverse the membrane as a helical segment. The Cytoplasmic portion of the chain corresponds to 140-379 (GLQKLSAVEV…LPQPLRSDCP (240 aa)). The interval 158–345 (KNVAHGLAWS…WHLQQQQREE (188 aa)) is cyclic dinucleotide-binding domain (CBD). Residues serine 167, tyrosine 172, 243–246 (RVYK), and serine 268 contribute to the 3',3'-c-di-GMP site. Residues 167 to 172 (SYYIGY), 243 to 246 (RVYK), and serine 268 contribute to the 2',3'-cGAMP site. The pLxIS motif signature appears at 363-366 (LQVS). Position 366 is a phosphoserine; by TBK1 (serine 366).

Belongs to the STING family. In terms of assembly, homodimer; forms a homodimer in absence of cyclic nucleotide (c-di-GMP or cGAMP). Homotetramer; in presence of cyclic nucleotide (c-di-GMP or cGAMP), forms tetramers and higher-order oligomers through side-by-side packing. Interacts (when phosphorylated) with IRF3; following activation and phosphorylation on the pLxIS motif by TBK1, recruits IRF3. In terms of processing, phosphorylation by TBK1 leads to activation and production of IFN-beta. Following cyclic nucleotide (c-di-GMP or cGAMP)-binding, activation and translocation from the endoplasmic reticulum, STING1 is phosphorylated by TBK1 at Ser-366 in the pLxIS motif. The phosphorylated pLxIS motif constitutes an IRF3-binding motif, leading to recruitment of the transcription factor IRF3 to induce type-I interferons and other cytokines.

It is found in the endoplasmic reticulum membrane. It localises to the cytoplasm. The protein resides in the perinuclear region. The protein localises to the endoplasmic reticulum-Golgi intermediate compartment membrane. Its subcellular location is the golgi apparatus membrane. It is found in the cytoplasmic vesicle. It localises to the autophagosome membrane. It carries out the reaction H(+)(in) = H(+)(out). Facilitator of innate immune signaling that acts as a sensor of cytosolic DNA from bacteria and viruses and promotes the production of type I interferon (IFN-alpha and IFN-beta). Innate immune response is triggered in response to non-CpG double-stranded DNA from viruses and bacteria delivered to the cytoplasm. Acts by binding cyclic dinucleotides: recognizes and binds cyclic di-GMP (c-di-GMP), a second messenger produced by bacteria, and cyclic GMP-AMP (cGAMP), a messenger produced by CGAS in response to DNA virus in the cytosol. Upon binding of c-di-GMP or cGAMP, STING1 oligomerizes and is able to activate both NF-kappa-B and IRF3 transcription pathways to induce expression of type I interferon and exert a potent anti-viral state. Exhibits 2',3' phosphodiester linkage-specific ligand recognition: can bind both 2'-3' linked cGAMP and 3'-3' linked cGAMP but is preferentially activated by 2'-3' linked cGAMP. In addition to promote the production of type I interferons, plays a direct role in autophagy. Following cGAMP-binding, STING1 buds from the endoplasmic reticulum into COPII vesicles, which then form the endoplasmic reticulum-Golgi intermediate compartment (ERGIC). The ERGIC serves as the membrane source for LC3 lipidation, leading to formation of autophagosomes that target cytosolic DNA or DNA viruses for degradation by the lysosome. Promotes autophagy by acting as a proton channel that directs proton efflux from the Golgi to facilitate LC3 lipidation. The autophagy- and interferon-inducing activities can be uncoupled and autophagy induction is independent of TBK1 phosphorylation. The polypeptide is Stimulator of interferon genes protein (Gallus gallus (Chicken)).